The chain runs to 135 residues: U-myrmeciitoxin(01)-Mg7a (135 aa).

Positions 1 to 21 are cleaved as a signal peptide; it reads MKLSCLSLALAIILLLAIVHS. A propeptide spanning residues 22-72 is cleaved from the precursor; that stretch reads PNMEVKALAGPEADAIGFADAFGEADAFGEADAFGEADAFGEADAFGEADA. Positions 69-95 are disordered; it reads EADAKRSKSSSKTKPKKPKKPKKKIKI. Residues 75-93 are compositionally biased toward basic residues; sequence SKSSSKTKPKKPKKPKKKI. Residue serine 120 is glycosylated (O-linked (GalNAc...) serine). 2 O-linked (GalNAc...) threonine glycosylation sites follow: threonine 129 and threonine 130.

Belongs to the formicidae venom precursor-01 superfamily. Post-translationally, glycosylation is critical to maintaining the aqueous solubility of this protein, but does not directly contribute to its activity. In terms of tissue distribution, expressed by the venom gland.

The protein resides in the secreted. Its subcellular location is the target cell membrane. Its function is as follows. Neurotoxin that triggers pain behavior and inflammation in mammals, and is paralytic and lethal to insects. Causes a time-dependent increase in cell leak current. May act by targeting membranes. In Myrmecia gulosa (Red bulldog ant), this protein is U-myrmeciitoxin(01)-Mg7a.